A 343-amino-acid chain; its full sequence is Anthranilate phosphoribosyltransferase (343 aa).

5-phospho-alpha-D-ribose 1-diphosphate-binding positions include G81, 84–85, 91–94, 109–117, and S121; these read GD, NVST, and KHGNRSVSS. G81 is an anthranilate binding site. Position 93 (S93) interacts with Mg(2+). N112 contacts anthranilate. An anthranilate-binding site is contributed by R167. Residues D226 and E227 each coordinate Mg(2+).

The protein belongs to the anthranilate phosphoribosyltransferase family. Homodimer. The cofactor is Mg(2+).

The enzyme catalyses N-(5-phospho-beta-D-ribosyl)anthranilate + diphosphate = 5-phospho-alpha-D-ribose 1-diphosphate + anthranilate. It functions in the pathway amino-acid biosynthesis; L-tryptophan biosynthesis; L-tryptophan from chorismate: step 2/5. Its function is as follows. Catalyzes the transfer of the phosphoribosyl group of 5-phosphorylribose-1-pyrophosphate (PRPP) to anthranilate to yield N-(5'-phosphoribosyl)-anthranilate (PRA). The protein is Anthranilate phosphoribosyltransferase of Chromohalobacter salexigens (strain ATCC BAA-138 / DSM 3043 / CIP 106854 / NCIMB 13768 / 1H11).